The primary structure comprises 428 residues: Histone deacetylase 3 (428 aa).

The interval 3–316 (KTVAYFYDPD…WTYETSLLVE (314 aa)) is histone deacetylase. Positions 17, 21, and 25 each coordinate 1D-myo-inositol 1,4,5,6-tetrakisphosphate. The active site involves histidine 135. Zn(2+) contacts are provided by aspartate 170, histidine 172, and aspartate 259. Residue arginine 265 participates in 1D-myo-inositol 1,4,5,6-tetrakisphosphate binding. Basic and acidic residues-rich tracts occupy residues 388 to 405 (DRTD…ENYS) and 415 to 428 (DGDH…DVEI). The disordered stretch occupies residues 388–428 (DRTDEADAEERGPEENYSRPEAPNEFYDGDHDNDKESDVEI). At serine 424 the chain carries Phosphoserine.

Belongs to the histone deacetylase family. HD type 1 subfamily. As to quaternary structure, interacts with HDAC7 and HDAC9. Interacts with DAXX, KDM4A, HDAC10 and DACH1. Found in a complex with NCOR1 and NCOR2. Component of the N-Cor repressor complex, at least composed of NCOR1, NCOR2, HDAC3, TBL1X, TBL1R, CORO2A and GPS2. Interacts with BCOR, MJD2A/JHDM3A, NRIP1, PRDM6 and SRY. Interacts with BTBD14B. Interacts with GLIS2. Interacts (via the DNA-binding domain) with NR2C1; the interaction recruits phosphorylated NR2C1 to PML bodies for sumoylation. Component of the Notch corepressor complex. Interacts with CBFA2T3 and NKAP. Interacts with APEX1; the interaction is not dependent on the acetylated status of APEX1. Interacts with ZMYND15. Interacts with SMRT/NCOR2 and BCL6 on DNA enhancer elements. Interacts with INSM1. Interacts with XBP1 isoform 1; the interaction occurs in endothelial cell (EC) under disturbed flow. Interacts (via C-terminus) with CCAR2 (via N-terminus). Interacts with and deacetylates MEF2D. Interacts with BEND3. Interacts with NKAPL. Interacts with DHX36; this interaction occurs in a RNA-dependent manner. Interacts weakly with CRY1; this interaction is enhanced in the presence of FBXL3. Interacts with FBXL3 and BMAL1. Interacts with NCOR1. Interacts with RARA. Interacts with SETD5. Sumoylated in vitro. In terms of processing, deubiquitinated on 'Lys-63'-linked ubiquitin chains by USP38; leading to a decreased level of histone acetylation.

The protein resides in the nucleus. The protein localises to the chromosome. It is found in the cytoplasm. Its subcellular location is the cytosol. It catalyses the reaction N(6)-acetyl-L-lysyl-[histone] + H2O = L-lysyl-[histone] + acetate. It carries out the reaction N(6)-acetyl-L-lysyl-[protein] + H2O = L-lysyl-[protein] + acetate. The enzyme catalyses N(6)-(2E)-butenoyl-L-lysyl-[protein] + H2O = (2E)-2-butenoate + L-lysyl-[protein]. The catalysed reaction is N(6)-(2-hydroxyisobutanoyl)-L-lysyl-[protein] + H2O = 2-hydroxy-2-methylpropanoate + L-lysyl-[protein]. It catalyses the reaction N(6)-[(S)-lactoyl]-L-lysyl-[protein] + H2O = (S)-lactate + L-lysyl-[protein]. With respect to regulation, inositol tetraphosphate (1D-myo-inositol 1,4,5,6-tetrakisphosphate) promotes the histone deacetylase activity by acting as an intermolecular glue between HDAC3 and NCOR2, thereby promoting its association with the N-Cor complex, a prerequisite for the histone deacetylase activity. Histone deacetylase that catalyzes the deacetylation of lysine residues on the N-terminal part of the core histones (H2A, H2B, H3 and H4), and some other non-histone substrates. Histone deacetylation gives a tag for epigenetic repression and plays an important role in transcriptional regulation, cell cycle progression and developmental events. Histone deacetylases act via the formation of large multiprotein complexes, such as N-Cor repressor complex, which activate the histone deacetylase activity. Participates in the BCL6 transcriptional repressor activity by deacetylating the H3 'Lys-27' (H3K27) on enhancer elements, antagonizing EP300 acetyltransferase activity and repressing proximal gene expression. Acts as a molecular chaperone for shuttling phosphorylated NR2C1 to PML bodies for sumoylation. Contributes, together with XBP1 isoform 1, to the activation of NFE2L2-mediated HMOX1 transcription factor gene expression in a PI(3)K/mTORC2/Akt-dependent signaling pathway leading to endothelial cell (EC) survival under disturbed flow/oxidative stress. Regulates both the transcriptional activation and repression phases of the circadian clock in a deacetylase activity-independent manner. During the activation phase, promotes the accumulation of ubiquitinated BMAL1 at the E-boxes and during the repression phase, blocks FBXL3-mediated CRY1/2 ubiquitination and promotes the interaction of CRY1 and BMAL1. The NCOR1-HDAC3 complex regulates the circadian expression of the core clock gene BMAL1 and the genes involved in lipid metabolism in the liver. Also functions as deacetylase for non-histone targets, such as KAT5, MEF2D, MAPK14, RARA and STAT3. Serves as a corepressor of RARA, mediating its deacetylation and repression, leading to inhibition of RARE DNA element binding. In addition to protein deacetylase activity, also acts as a protein-lysine deacylase by recognizing other acyl groups: catalyzes removal of (2E)-butenoyl (crotonyl), lactoyl (lactyl) and 2-hydroxyisobutanoyl (2-hydroxyisobutyryl) acyl groups from lysine residues, leading to protein decrotonylation, delactylation and de-2-hydroxyisobutyrylation, respectively. Catalyzes decrotonylation of MAPRE1/EB1. Mediates delactylation NBN/NBS1, thereby inhibiting DNA double-strand breaks (DSBs) via homologous recombination (HR). This is Histone deacetylase 3 from Mus musculus (Mouse).